The sequence spans 321 residues: Ribosomal RNA small subunit methyltransferase H (321 aa).

Residues 33 to 35, Asp58, Phe85, Asp111, and Gln118 contribute to the S-adenosyl-L-methionine site; that span reads AGH.

Belongs to the methyltransferase superfamily. RsmH family.

The protein resides in the cytoplasm. It catalyses the reaction cytidine(1402) in 16S rRNA + S-adenosyl-L-methionine = N(4)-methylcytidine(1402) in 16S rRNA + S-adenosyl-L-homocysteine + H(+). Functionally, specifically methylates the N4 position of cytidine in position 1402 (C1402) of 16S rRNA. The polypeptide is Ribosomal RNA small subunit methyltransferase H (Chloroherpeton thalassium (strain ATCC 35110 / GB-78)).